We begin with the raw amino-acid sequence, 682 residues long: DNA ligase (682 aa).

NAD(+) contacts are provided by residues Asp-38–Asp-42, Ser-87–Ile-88, and Glu-119. The active-site N6-AMP-lysine intermediate is Lys-121. Arg-142, Glu-181, Lys-298, and Lys-322 together coordinate NAD(+). Zn(2+) contacts are provided by Cys-416, Cys-419, Cys-434, and Cys-439. The BRCT domain maps to Gly-601 to Arg-682.

The protein belongs to the NAD-dependent DNA ligase family. LigA subfamily. Mg(2+) serves as cofactor. Mn(2+) is required as a cofactor.

It catalyses the reaction NAD(+) + (deoxyribonucleotide)n-3'-hydroxyl + 5'-phospho-(deoxyribonucleotide)m = (deoxyribonucleotide)n+m + AMP + beta-nicotinamide D-nucleotide.. In terms of biological role, DNA ligase that catalyzes the formation of phosphodiester linkages between 5'-phosphoryl and 3'-hydroxyl groups in double-stranded DNA using NAD as a coenzyme and as the energy source for the reaction. It is essential for DNA replication and repair of damaged DNA. This chain is DNA ligase, found in Desulfosudis oleivorans (strain DSM 6200 / JCM 39069 / Hxd3) (Desulfococcus oleovorans).